Here is a 320-residue protein sequence, read N- to C-terminus: GMP reductase (320 aa).

The active-site Thioimidate intermediate is the C174. 203 to 226 (IIADGGLRVHGDIAKSIRMGASFC) contacts NADP(+).

It belongs to the IMPDH/GMPR family. GuaC type 2 subfamily.

It catalyses the reaction IMP + NH4(+) + NADP(+) = GMP + NADPH + 2 H(+). Functionally, catalyzes the irreversible NADPH-dependent deamination of GMP to IMP. It functions in the conversion of nucleobase, nucleoside and nucleotide derivatives of G to A nucleotides, and in maintaining the intracellular balance of A and G nucleotides. The chain is GMP reductase from Mycoplasma mycoides subsp. mycoides SC (strain CCUG 32753 / NCTC 10114 / PG1).